A 381-amino-acid polypeptide reads, in one-letter code: Acetylornithine deacetylase (381 aa).

His79 provides a ligand contact to Zn(2+). Residue Asp81 is part of the active site. Asp111 is a binding site for Zn(2+). Glu143 is a catalytic residue. Positions 144, 168, and 354 each coordinate Zn(2+).

The protein belongs to the peptidase M20A family. ArgE subfamily. In terms of assembly, homodimer. Zn(2+) serves as cofactor. Co(2+) is required as a cofactor. The cofactor is glutathione.

The protein localises to the cytoplasm. It carries out the reaction N(2)-acetyl-L-ornithine + H2O = L-ornithine + acetate. It functions in the pathway amino-acid biosynthesis; L-arginine biosynthesis; L-ornithine from N(2)-acetyl-L-ornithine (linear): step 1/1. In terms of biological role, catalyzes the hydrolysis of the amide bond of N(2)-acetylated L-amino acids. Cleaves the acetyl group from N-acetyl-L-ornithine to form L-ornithine, an intermediate in L-arginine biosynthesis pathway, and a branchpoint in the synthesis of polyamines. The polypeptide is Acetylornithine deacetylase (Buchnera aphidicola subsp. Schizaphis graminum (strain Sg)).